Here is a 361-residue protein sequence, read N- to C-terminus: 5-formaminoimidazole-4-carboxamide-1-(beta)-D-ribofuranosyl 5'-monophosphate synthetase (361 aa).

5-amino-1-(5-phospho-beta-D-ribosyl)imidazole-4-carboxamide is bound by residues His27 and Ser94. Residues 116-348 (RAILRWEAER…MGQRIAKEIK (233 aa)) enclose the ATP-grasp domain. Residues 146–208 (PDEI…ANYC) and Glu230 each bind ATP. Asn258 provides a ligand contact to 5-amino-1-(5-phospho-beta-D-ribosyl)imidazole-4-carboxamide. Gln297 and Glu310 together coordinate Mg(2+).

It belongs to the phosphohexose mutase family. Mg(2+) is required as a cofactor. The cofactor is Mn(2+).

The catalysed reaction is 5-amino-1-(5-phospho-beta-D-ribosyl)imidazole-4-carboxamide + formate + ATP = 5-formamido-1-(5-phospho-D-ribosyl)imidazole-4-carboxamide + ADP + phosphate. Its pathway is purine metabolism; IMP biosynthesis via de novo pathway; 5-formamido-1-(5-phospho-D-ribosyl)imidazole-4-carboxamide from 5-amino-1-(5-phospho-D-ribosyl)imidazole-4-carboxamide (formate route): step 1/1. In terms of biological role, catalyzes the ATP- and formate-dependent formylation of 5-aminoimidazole-4-carboxamide-1-beta-d-ribofuranosyl 5'-monophosphate (AICAR) to 5-formaminoimidazole-4-carboxamide-1-beta-d-ribofuranosyl 5'-monophosphate (FAICAR) in the absence of folates. The sequence is that of 5-formaminoimidazole-4-carboxamide-1-(beta)-D-ribofuranosyl 5'-monophosphate synthetase from Methanococcus vannielii (strain ATCC 35089 / DSM 1224 / JCM 13029 / OCM 148 / SB).